Reading from the N-terminus, the 348-residue chain is GMP reductase (348 aa).

108-131 (ADFQKTKDVMALSDELIFICIDIA) is an NADP(+) binding site. K(+) is bound by residues G181 and G183. Catalysis depends on C186, which acts as the Thioimidate intermediate. 216-239 (IIGDGGCACAGDVAKAFGGGADFV) lines the NADP(+) pocket.

The protein belongs to the IMPDH/GMPR family. GuaC type 1 subfamily. In terms of assembly, homotetramer.

It catalyses the reaction IMP + NH4(+) + NADP(+) = GMP + NADPH + 2 H(+). Functionally, catalyzes the irreversible NADPH-dependent deamination of GMP to IMP. It functions in the conversion of nucleobase, nucleoside and nucleotide derivatives of G to A nucleotides, and in maintaining the intracellular balance of A and G nucleotides. The sequence is that of GMP reductase from Vibrio vulnificus (strain CMCP6).